Consider the following 242-residue polypeptide: Octanoyltransferase (242 aa).

Positions 31–206 constitute a BPL/LPL catalytic domain; sequence SQTTDEIWFL…LFLKNFGYNQ (176 aa). Substrate-binding positions include 70–77, 137–139, and 150–152; these read RGGQVTYH, SIG, and GLA. Residue Cys168 is the Acyl-thioester intermediate of the active site.

The protein belongs to the LipB family.

The protein resides in the cytoplasm. The catalysed reaction is octanoyl-[ACP] + L-lysyl-[protein] = N(6)-octanoyl-L-lysyl-[protein] + holo-[ACP] + H(+). It participates in protein modification; protein lipoylation via endogenous pathway; protein N(6)-(lipoyl)lysine from octanoyl-[acyl-carrier-protein]: step 1/2. Catalyzes the transfer of endogenously produced octanoic acid from octanoyl-acyl-carrier-protein onto the lipoyl domains of lipoate-dependent enzymes. Lipoyl-ACP can also act as a substrate although octanoyl-ACP is likely to be the physiological substrate. In Coxiella burnetii (strain CbuG_Q212) (Coxiella burnetii (strain Q212)), this protein is Octanoyltransferase.